Here is a 314-residue protein sequence, read N- to C-terminus: Melanoma-associated antigen 2 (314 aa).

Positions methionine 1 to glycine 20 are enriched in basic and acidic residues. The segment at methionine 1–serine 69 is disordered. Positions glutamate 21–threonine 44 are enriched in low complexity. A Phosphoserine modification is found at serine 64. Positions isoleucine 109–alanine 308 constitute an MAGE domain.

Interacts with TRIM28 and UBE2H. Interacts with HDAC3. Interacts with PML (isoform PML-1, isoform PML-2, isoform PML-3, isoform PML-4 and isoform PML-5). Expressed in many tumors of several types, such as melanoma, head and neck squamous cell carcinoma, lung carcinoma and breast carcinoma, but not in normal tissues except for testes.

It is found in the nucleus. It localises to the PML body. Functionally, reduces p53/TP53 transactivation function through recruitment of HDAC3 to p53/TP53 transcription sites. Also represses p73/TP73 activity. Proposed to enhance ubiquitin ligase activity of RING-type zinc finger-containing E3 ubiquitin-protein ligases. In vitro enhances ubiquitin ligase activity of TRIM28 and stimulates p53/TP53 ubiquitination by TRIM28 potentially in presence of Ubl-conjugating enzyme UBE2H. Proposed to act through recruitment and/or stabilization of the Ubl-conjugating enzyme (E2) at the E3:substrate complex. May play a role in embryonal development and tumor transformation or aspects of tumor progression. In vitro promotes cell viability in melanoma cell lines. Antigen recognized on a melanoma by autologous cytolytic T-lymphocytes. Negatively regulates acetylation and sumoylation of PML and represses PML-induced p53/TP53 acetylation and activation. The polypeptide is Melanoma-associated antigen 2 (MAGEA2) (Homo sapiens (Human)).